The chain runs to 56 residues: Large ribosomal subunit protein bL32 (56 aa).

A disordered region spans residues 1–26 (MAVQKSKVTRSRRGQRRSHDALTAAA). Residues 7–16 (KVTRSRRGQR) show a composition bias toward basic residues.

This sequence belongs to the bacterial ribosomal protein bL32 family.

The sequence is that of Large ribosomal subunit protein bL32 (rpmF) from Moritella marina (Vibrio marinus).